Here is a 177-residue protein sequence, read N- to C-terminus: Large ribosomal subunit protein uL6 (177 aa).

Belongs to the universal ribosomal protein uL6 family. Part of the 50S ribosomal subunit.

In terms of biological role, this protein binds to the 23S rRNA, and is important in its secondary structure. It is located near the subunit interface in the base of the L7/L12 stalk, and near the tRNA binding site of the peptidyltransferase center. In Thioalkalivibrio sulfidiphilus (strain HL-EbGR7), this protein is Large ribosomal subunit protein uL6.